The following is a 123-amino-acid chain: Maintenance of telomere capping protein 3, mitochondrial (123 aa).

Residues 1-37 (MMGRNGIRLALKRSFSTYQPPVVEITNITKLWPTLRP) constitute a mitochondrion transit peptide.

The protein localises to the mitochondrion. May be involved in telomere capping. The polypeptide is Maintenance of telomere capping protein 3, mitochondrial (MTC3) (Saccharomyces cerevisiae (strain ATCC 204508 / S288c) (Baker's yeast)).